Reading from the N-terminus, the 149-residue chain is C-type lectin domain family 2 member B (149 aa).

The Cytoplasmic segment spans residues 1–7; sequence MMTKHKK. Residues 8 to 25 form a helical; Signal-anchor for type II membrane protein membrane-spanning segment; that stretch reads CFIIVGVLITTNIITLIV. Residues 26–149 are Extracellular-facing; it reads KLTRDSQSLC…RKWICRKRIH (124 aa). A disulfide bond links Cys35 and Cys46. A C-type lectin domain is found at 42 to 145; it reads FQNKCYYFSK…CYTERKWICR (104 aa). Residues Asn57, Asn62, and Asn100 are each glycosylated (N-linked (GlcNAc...) asparagine). Disulfide bonds link Cys63–Cys144 and Cys123–Cys136.

As to quaternary structure, homodimer. Interacts with NKp80/KLRF1. Post-translationally, (Microbial infection) Ubiquitinated by human herpesvirus 8 protein K5, leading to endolysosomal degradation. N-linked glycosylated; required to enable surface expression and the extent of surface expression correlates with the number of functional conventional N-glycosylation sites. As to expression, expressed preferentially in lymphoid tissues, and in most hematopoietic cell types.

Its subcellular location is the cell membrane. The protein resides in the golgi apparatus membrane. In terms of biological role, membrane-bound protein expressed on myeloid cells which acts as a ligand to stimulate the activating receptor NKp80/KLRF1, expressed on the surface of natural killer (NK) cells. In turn, stimulates NK-cell cytotoxicity and cytokine production leading to the cytolysis of malignant CLEC2B-expressing myeloid cells. This Homo sapiens (Human) protein is C-type lectin domain family 2 member B (CLEC2B).